We begin with the raw amino-acid sequence, 469 residues long: Putative diacyglycerol O-acyltransferase MT0231 (469 aa).

Residue His139 is the Proton acceptor of the active site.

It belongs to the long-chain O-acyltransferase family.

The enzyme catalyses an acyl-CoA + a 1,2-diacyl-sn-glycerol = a triacyl-sn-glycerol + CoA. The protein operates within glycerolipid metabolism; triacylglycerol biosynthesis. This is Putative diacyglycerol O-acyltransferase MT0231 from Mycobacterium tuberculosis (strain CDC 1551 / Oshkosh).